A 301-amino-acid polypeptide reads, in one-letter code: MDSTTLSQTPGSRVSQYIALTKPRVTQLAVFCAVIGMFLSTPGMVPWTPLIGGTVGIWLLAGAAFAINCLVEQKIDAKMRRTSWRPSARGEITTAQILLFSAVLGGLGMWTLYTFANPLTMWLTLATFVGYAVIYTLLLKPATPQNIVIGGASGAMPPALGWAAVTGHVPGDAWILVLIIFVWTPPHFWALALYRRKDYENAGLPMLPNTHGEKYTRLHILLYTVILFAVTMMPFISGMSGVVYLAAAVLLGALFLAYAWKIYREYSDDLARKTFRYSIVYLSLLFAALLIDHYARVLIGA.

8 helical membrane-spanning segments follow: residues 25 to 45, 47 to 67, 97 to 117, 119 to 139, 147 to 167, 173 to 193, 235 to 255, and 279 to 299; these read VTQL…PGMV, WTPL…AFAI, ILLF…TFAN, LTMW…TLLL, IVIG…AVTG, AWIL…ALAL, FISG…GALF, and IVYL…RVLI.

It belongs to the UbiA prenyltransferase family. Protoheme IX farnesyltransferase subfamily.

Its subcellular location is the cell inner membrane. It carries out the reaction heme b + (2E,6E)-farnesyl diphosphate + H2O = Fe(II)-heme o + diphosphate. Its pathway is porphyrin-containing compound metabolism; heme O biosynthesis; heme O from protoheme: step 1/1. Its function is as follows. Converts heme B (protoheme IX) to heme O by substitution of the vinyl group on carbon 2 of heme B porphyrin ring with a hydroxyethyl farnesyl side group. This chain is Protoheme IX farnesyltransferase, found in Paraburkholderia xenovorans (strain LB400).